A 457-amino-acid polypeptide reads, in one-letter code: Multidrug resistance protein MdtK (457 aa).

12 helical membrane-spanning segments follow: residues 11-31 (LLAL…MGFV), 53-73 (IWLP…PVIA), 93-113 (WLVA…GHII), 127-147 (AIGY…FQVL), 160-180 (GMVI…IFIY), 188-208 (LGGV…YLLM), 239-259 (IAIG…FAVV), 277-297 (ALNF…AATI), 316-336 (RTAI…TIVL), 357-377 (LMLL…GSGV), 387-407 (IFFI…YLLA), and 418-438 (PSGF…MMAL).

It belongs to the multi antimicrobial extrusion (MATE) (TC 2.A.66.1) family. MdtK subfamily.

The protein resides in the cell inner membrane. Functionally, multidrug efflux pump that functions probably as a Na(+)/drug antiporter. This Edwardsiella ictaluri (strain 93-146) protein is Multidrug resistance protein MdtK.